Reading from the N-terminus, the 88-residue chain is Exodeoxyribonuclease 7 small subunit (88 aa).

This sequence belongs to the XseB family. As to quaternary structure, heterooligomer composed of large and small subunits.

The protein localises to the cytoplasm. The catalysed reaction is Exonucleolytic cleavage in either 5'- to 3'- or 3'- to 5'-direction to yield nucleoside 5'-phosphates.. In terms of biological role, bidirectionally degrades single-stranded DNA into large acid-insoluble oligonucleotides, which are then degraded further into small acid-soluble oligonucleotides. The chain is Exodeoxyribonuclease 7 small subunit from Tolumonas auensis (strain DSM 9187 / NBRC 110442 / TA 4).